Consider the following 222-residue polypeptide: Phosphoglycolate phosphatase (222 aa).

Residue D12 is the Nucleophile of the active site. Mg(2+) is bound by residues D12, D14, and D175.

This sequence belongs to the HAD-like hydrolase superfamily. CbbY/CbbZ/Gph/YieH family. It depends on Mg(2+) as a cofactor.

It catalyses the reaction 2-phosphoglycolate + H2O = glycolate + phosphate. It participates in organic acid metabolism; glycolate biosynthesis; glycolate from 2-phosphoglycolate: step 1/1. Functionally, specifically catalyzes the dephosphorylation of 2-phosphoglycolate. Is involved in the dissimilation of the intracellular 2-phosphoglycolate formed during the DNA repair of 3'-phosphoglycolate ends, a major class of DNA lesions induced by oxidative stress. In Chromobacterium violaceum (strain ATCC 12472 / DSM 30191 / JCM 1249 / CCUG 213 / NBRC 12614 / NCIMB 9131 / NCTC 9757 / MK), this protein is Phosphoglycolate phosphatase.